A 265-amino-acid polypeptide reads, in one-letter code: Apolipoprotein A-I (265 aa).

A signal peptide spans 1–18 (MKAVVLTLAVLFLTGSQA). 2 tandem repeats follow at residues 67–88 (LKLL…EQLG) and 89–110 (PVTR…QEMN). The segment at 67–265 (LKLLDNWDSL…DEASKKLNAQ (199 aa)) is 10 X approximate tandem repeats. Methionine sulfoxide is present on M109. Residues 111-121 (KDLQEVKQKVQ) form a 3; half-length repeat. Repeat copies occupy residues 122–142 (PYLD…RQKV), 144–165 (PLGE…DKLT), 166–187 (PLAE…QQLA), 188–209 (PYSD…EGGG), and 210–230 (SLVQ…EKAK). A 9; half-length repeat occupies 231–241 (PALEDLRQGLL). The stretch at 242-265 (PVLENLKVSILAAIDEASKKLNAQ) is repeat 10.

This sequence belongs to the apolipoprotein A1/A4/E family. As to quaternary structure, homodimer. Interacts with APOA1BP and CLU. Component of a sperm activating protein complex (SPAP), consisting of APOA1, an immunoglobulin heavy chain, an immunoglobulin light chain and albumin. Interacts with NDRG1. Interacts with SCGB3A2. Interacts with NAXE and YJEFN3. In terms of processing, glycosylated. Palmitoylated. Post-translationally, phosphorylation sites are present in the extracellular medium. Major protein of plasma HDL, also found in chylomicrons.

The protein resides in the secreted. Its function is as follows. Participates in the reverse transport of cholesterol from tissues to the liver for excretion by promoting cholesterol efflux from tissues and by acting as a cofactor for the lecithin cholesterol acyltransferase (LCAT). As part of the SPAP complex, activates spermatozoa motility. In Balaenoptera acutorostrata scammoni (North Pacific minke whale), this protein is Apolipoprotein A-I (APOA1).